We begin with the raw amino-acid sequence, 274 residues long: Diaminopimelate epimerase (274 aa).

3 residues coordinate substrate: N11, Q44, and N64. Catalysis depends on C73, which acts as the Proton donor. Residues 74–75, N157, N190, and 208–209 each bind substrate; these read GN and ER. Residue C217 is the Proton acceptor of the active site. 218-219 lines the substrate pocket; that stretch reads GS.

Belongs to the diaminopimelate epimerase family. Homodimer.

It is found in the cytoplasm. The enzyme catalyses (2S,6S)-2,6-diaminopimelate = meso-2,6-diaminopimelate. The protein operates within amino-acid biosynthesis; L-lysine biosynthesis via DAP pathway; DL-2,6-diaminopimelate from LL-2,6-diaminopimelate: step 1/1. Catalyzes the stereoinversion of LL-2,6-diaminopimelate (L,L-DAP) to meso-diaminopimelate (meso-DAP), a precursor of L-lysine and an essential component of the bacterial peptidoglycan. In Histophilus somni (strain 2336) (Haemophilus somnus), this protein is Diaminopimelate epimerase.